Consider the following 153-residue polypeptide: RNA-binding protein OPG065 (153 aa).

Positions 1–33 constitute a Z-binding domain; the sequence is MEKREVNKALYDLQRSAMVYSSNDTPPRWSTTM. Polar residues predominate over residues 22–34; sequence SNDTPPRWSTTMD. Residues 22-44 are disordered; sequence SNDTPPRWSTTMDADTRPTDSDA. One can recognise a DRBM domain in the interval 80-147; sequence NPVTVINEYC…AKLAVDKLLS (68 aa).

It belongs to the orthopoxvirus OPG065 family. As to quaternary structure, interacts with host G1P2/ISG15. Interacts with host EIF2AK2/PKR. Interacts with host ZBP1.

In terms of biological role, RNA-binding protein that plays a role in the inhibition of multiple cellular antiviral responses activated by double-stranded RNA (dsRNA), such as inhibition of PKR activation, necroptosis, and IFN-mediated antiviral activities. Recognizes and binds Z-RNA structures via its Z-binding domain and dsRNA via its DRBM domain: RNA-binding activity is required to escape host ZBP1-dependent necroptosis. Mechanistically, the Z-binding domain binds Z-RNAs that are produced during vaccinia virus infection, thereby competing with Z-RNA detection by host ZBP1, suppressing ZBP1-dependent necroptosis. Acts as a key inhibitor of the interferon response by blocking the phosphorylation and subsequent activation of IRF3 and IRF7 kinases that are required for interferon-alpha gene expression. Inhibits NF-kappa-B activation and the ubiquitin-like protein ISG15, which is an early antiviral protein. The binding with host ISG15 subsequently blocks host ISGylation. The protein is RNA-binding protein OPG065 (OPG065) of Monkeypox virus.